The primary structure comprises 72 residues: Sec-independent protein translocase protein TatA (72 aa).

A helical transmembrane segment spans residues 1–21; the sequence is MLGGISIWQLLIVLAILVLIF.

The protein belongs to the TatA/E family. In terms of assembly, the Tat system comprises two distinct complexes: a TatABC complex, containing multiple copies of TatA, TatB and TatC subunits, and a separate TatA complex, containing only TatA subunits. Substrates initially bind to the TatABC complex, which probably triggers association of the separate TatA complex to form the active translocon.

The protein resides in the cell inner membrane. In terms of biological role, part of the twin-arginine translocation (Tat) system that transports large folded proteins containing a characteristic twin-arginine motif in their signal peptide across membranes. TatA could form the protein-conducting channel of the Tat system. The chain is Sec-independent protein translocase protein TatA from Marinomonas sp. (strain MWYL1).